The sequence spans 198 residues: Recombination protein RecR (198 aa).

The C4-type zinc finger occupies 57–72 (CSVCCNLTDQDPCQIC). Residues 80–175 (STICVVQEPR…KVTRIARGLP (96 aa)) form the Toprim domain.

It belongs to the RecR family.

Functionally, may play a role in DNA repair. It seems to be involved in an RecBC-independent recombinational process of DNA repair. It may act with RecF and RecO. This chain is Recombination protein RecR, found in Symbiobacterium thermophilum (strain DSM 24528 / JCM 14929 / IAM 14863 / T).